We begin with the raw amino-acid sequence, 41 residues long: MADQPERNPNSQPVELNRTSLYLGLLLVFVVGLLFSSYFLN.

Residues 20 to 40 form a helical membrane-spanning segment; the sequence is SLYLGLLLVFVVGLLFSSYFL.

The protein belongs to the PsbL family. PSII is composed of 1 copy each of membrane proteins PsbA, PsbB, PsbC, PsbD, PsbE, PsbF, PsbH, PsbI, PsbJ, PsbK, PsbL, PsbM, PsbT, PsbX, PsbY, PsbZ, Psb30/Ycf12, peripheral proteins PsbO, CyanoQ (PsbQ), PsbU, PsbV and a large number of cofactors. It forms dimeric complexes.

The protein localises to the cellular thylakoid membrane. In terms of biological role, one of the components of the core complex of photosystem II (PSII). PSII is a light-driven water:plastoquinone oxidoreductase that uses light energy to abstract electrons from H(2)O, generating O(2) and a proton gradient subsequently used for ATP formation. It consists of a core antenna complex that captures photons, and an electron transfer chain that converts photonic excitation into a charge separation. This subunit is found at the monomer-monomer interface and is required for correct PSII assembly and/or dimerization. The chain is Photosystem II reaction center protein L from Synechococcus sp. (strain JA-2-3B'a(2-13)) (Cyanobacteria bacterium Yellowstone B-Prime).